The following is a 454-amino-acid chain: Phosphoglucosamine mutase (454 aa).

The active-site Phosphoserine intermediate is Ser101. Residues Ser101, Asp243, Asp245, and Asp247 each contribute to the Mg(2+) site. Ser101 bears the Phosphoserine mark.

This sequence belongs to the phosphohexose mutase family. Mg(2+) is required as a cofactor. Activated by phosphorylation.

The catalysed reaction is alpha-D-glucosamine 1-phosphate = D-glucosamine 6-phosphate. Its function is as follows. Catalyzes the conversion of glucosamine-6-phosphate to glucosamine-1-phosphate. In Citrifermentans bemidjiense (strain ATCC BAA-1014 / DSM 16622 / JCM 12645 / Bem) (Geobacter bemidjiensis), this protein is Phosphoglucosamine mutase.